Here is a 62-residue protein sequence, read N- to C-terminus: Calmodulin regulator protein PCP4 (62 aa).

A disordered region spans residues 1–40 (MSERQGAGTTNGKDKPSGENDGQKKVQEEFDIDMDAPETE). Residues 12-28 (GKDKPSGENDGQKKVQE) are compositionally biased toward basic and acidic residues. The acidic; binds calcium and is required for modulating the calcium-binding kinetics of calmodulin stretch occupies residues 28 to 40 (EEFDIDMDAPETE). The 24-residue stretch at 39-62 (TERAAVAIQSQFRKFQKKKAGSQS) folds into the IQ domain.

This sequence belongs to the PCP4 family. As to quaternary structure, binds to both calcium-free and calcium-bound calmodulin. The affinity for the calcium-bound form is 50-fold greater.

Functions as a modulator of calcium-binding by calmodulin. Thereby, regulates calmodulin activity and the different processes it controls. For instance, may play a role in neuronal differentiation through activation of calmodulin-dependent kinase signaling pathways. The protein is Calmodulin regulator protein PCP4 of Bos taurus (Bovine).